Here is a 1042-residue protein sequence, read N- to C-terminus: V(D)J recombination-activating protein 1 (1042 aa).

The segment covering 40–52 (KTTEENQKEKNSS) has biased composition (basic and acidic residues). Residues 40–80 (KTTEENQKEKNSSEGKPSLEQSPAVLDKASGQKPEVAPPAF) form a disordered region. Lysine 233 participates in a covalent cross-link: Glycyl lysine isopeptide (Lys-Gly) (interchain with G-Cter in ubiquitin). Positions 268, 272, 292, 295, 297, 307, 309, 312, 315, 327, 330, 357, 362, 374, and 378 each coordinate Zn(2+). Residues 292–331 (CQICEHILADPVETSCKHVFCRICILRCLKVMGSYCPSCQ) form an RING-type zinc finger. The segment at 353 to 382 (LIVKCSAPECNEEVSLEKYNHHVSSHKESR) adopts an RAG1-type zinc-finger fold. Residues 391–458 (GGRPRQHLLS…QADELEAIMQ (68 aa)) constitute a DNA-binding region (NBD). A divalent metal cation is bound by residues aspartate 602, aspartate 710, and glutamate 964.

It belongs to the RAG1 family. Homodimer. Component of the RAG complex composed of core components RAG1 and RAG2, and associated component HMGB1 or HMGB2. Interacts with DCAF1, leading to recruitment of the CUL4A-RBX1-DDB1-DCAF1/VPRBP complex to ubiquitinate proteins and limit error-prone repair during V(D)J recombination. The cofactor is Mg(2+). Requires Mn(2+) as cofactor. In terms of processing, autoubiquitinated in the presence of CDC34/UBCH3.

The protein resides in the nucleus. The catalysed reaction is S-ubiquitinyl-[E2 ubiquitin-conjugating enzyme]-L-cysteine + [acceptor protein]-L-lysine = [E2 ubiquitin-conjugating enzyme]-L-cysteine + N(6)-ubiquitinyl-[acceptor protein]-L-lysine.. In terms of biological role, catalytic component of the RAG complex, a multiprotein complex that mediates the DNA cleavage phase during V(D)J recombination. V(D)J recombination assembles a diverse repertoire of immunoglobulin and T-cell receptor genes in developing B and T-lymphocytes through rearrangement of different V (variable), in some cases D (diversity), and J (joining) gene segments. In the RAG complex, RAG1 mediates the DNA-binding to the conserved recombination signal sequences (RSS) and catalyzes the DNA cleavage activities by introducing a double-strand break between the RSS and the adjacent coding segment. RAG2 is not a catalytic component but is required for all known catalytic activities. DNA cleavage occurs in 2 steps: a first nick is introduced in the top strand immediately upstream of the heptamer, generating a 3'-hydroxyl group that can attack the phosphodiester bond on the opposite strand in a direct transesterification reaction, thereby creating 4 DNA ends: 2 hairpin coding ends and 2 blunt, 5'-phosphorylated ends. The chromatin structure plays an essential role in the V(D)J recombination reactions and the presence of histone H3 trimethylated at 'Lys-4' (H3K4me3) stimulates both the nicking and haipinning steps. The RAG complex also plays a role in pre-B cell allelic exclusion, a process leading to expression of a single immunoglobulin heavy chain allele to enforce clonality and monospecific recognition by the B-cell antigen receptor (BCR) expressed on individual B-lymphocytes. The introduction of DNA breaks by the RAG complex on one immunoglobulin allele induces ATM-dependent repositioning of the other allele to pericentromeric heterochromatin, preventing accessibility to the RAG complex and recombination of the second allele. In addition to its endonuclease activity, RAG1 also acts as an E3 ubiquitin-protein ligase that mediates monoubiquitination of histone H3. Histone H3 monoubiquitination is required for the joining step of V(D)J recombination. Mediates polyubiquitination of KPNA1. The chain is V(D)J recombination-activating protein 1 (RAG1) from Oryctolagus cuniculus (Rabbit).